The sequence spans 573 residues: Sterol esterase 1 (573 aa).

Over 1–12 (MGVSAVLKRARN) the chain is Cytoplasmic. Residues 13–33 (LLATFIVCCFMAVVLVLALAH) lie within the membrane without spanning it. Over 34–573 (HFINEHRDTR…TELEMVAEKA (540 aa)) the chain is Cytoplasmic. Catalysis depends on serine 315, which acts as the Nucleophile. Active-site charge relay system residues include aspartate 489 and histidine 520.

The protein belongs to the AB hydrolase superfamily. Not N-glycosylated.

Its subcellular location is the lipid droplet. It is found in the membrane. The enzyme catalyses a sterol ester + H2O = a sterol + a fatty acid + H(+). Mediates the hydrolysis of steryl esters, thereby playing a central role in lipid metabolism. Under heme-deficient conditions, it constitutes the major steryl ester hydrolase, suggesting that it plays a central role in mobilization of steryl esters under anaerobic conditions. In Saccharomyces cerevisiae (strain ATCC 204508 / S288c) (Baker's yeast), this protein is Sterol esterase 1 (YEH1).